Reading from the N-terminus, the 105-residue chain is Large ribosomal subunit protein bL21 (105 aa).

This sequence belongs to the bacterial ribosomal protein bL21 family. As to quaternary structure, part of the 50S ribosomal subunit. Contacts protein L20.

Functionally, this protein binds to 23S rRNA in the presence of protein L20. This Methylobacterium nodulans (strain LMG 21967 / CNCM I-2342 / ORS 2060) protein is Large ribosomal subunit protein bL21.